We begin with the raw amino-acid sequence, 351 residues long: Minor outer capsid protein P9 (351 aa).

Residues 245–310 (GGVPAALPQP…VPSGNVSARG (66 aa)) are disordered. Residues 285–297 (MIRKKVETSKDGP) are compositionally biased toward basic and acidic residues.

It belongs to the phytoreovirus minor outer capsid protein P9 family.

It is found in the virion. It localises to the host cytoplasm. In terms of biological role, minor outer capsid protein. This Rice dwarf virus (isolate Akita) (RDV) protein is Minor outer capsid protein P9.